Here is a 278-residue protein sequence, read N- to C-terminus: Large ribosomal subunit protein uL2 (278 aa).

Positions 212-221 (NRWLGKRPHN) are enriched in basic residues. Residues 212–278 (NRWLGKRPHN…ILSSRHNRKK (67 aa)) are disordered.

This sequence belongs to the universal ribosomal protein uL2 family. In terms of assembly, part of the 50S ribosomal subunit. Forms a bridge to the 30S subunit in the 70S ribosome.

Functionally, one of the primary rRNA binding proteins. Required for association of the 30S and 50S subunits to form the 70S ribosome, for tRNA binding and peptide bond formation. It has been suggested to have peptidyltransferase activity; this is somewhat controversial. Makes several contacts with the 16S rRNA in the 70S ribosome. The polypeptide is Large ribosomal subunit protein uL2 (Methylorubrum populi (strain ATCC BAA-705 / NCIMB 13946 / BJ001) (Methylobacterium populi)).